The chain runs to 136 residues: Large ribosomal subunit protein bL12 (136 aa).

It belongs to the bacterial ribosomal protein bL12 family. As to quaternary structure, homodimer. Part of the ribosomal stalk of the 50S ribosomal subunit. Forms a multimeric L10(L12)X complex, where L10 forms an elongated spine to which 2 to 4 L12 dimers bind in a sequential fashion. Binds GTP-bound translation factors.

In terms of biological role, forms part of the ribosomal stalk which helps the ribosome interact with GTP-bound translation factors. Is thus essential for accurate translation. The chain is Large ribosomal subunit protein bL12 from Synechococcus sp. (strain JA-2-3B'a(2-13)) (Cyanobacteria bacterium Yellowstone B-Prime).